Reading from the N-terminus, the 547-residue chain is Cdc42-interacting protein 4 (547 aa).

The tract at residues 1–117 is required for translocation to the plasma membrane in response to insulin, podosome formation and interaction with AKAP9 and microtubules; it reads MDWGTELWDQ…EMKQERKMHF (117 aa). An F-BAR domain is found at 1–264; that stretch reads MDWGTELWDQ…AAESVDAKND (264 aa). Residues 67–259 are a coiled coil; it reads FSQQQSFVQL…EGMKVAAESV (193 aa). Residues 293-483 are interaction with CDC42; sequence RVPSDSSLGT…YTEFDEDFEE (191 aa). The interaction with PDE6G stretch occupies residues 293-547; sequence RVPSDSSLGT…PTSYLRVTLN (255 aa). The disordered stretch occupies residues 294–323; that stretch reads VPSDSSLGTPDGRPELRAASSRSRAKRWPF. Phosphoserine occurs at positions 296, 298, and 299. Residues 332-425 are a coiled coil; that stretch reads TEDFSHLPPE…ESRVLSNRGD (94 aa). One can recognise an REM-1 domain in the interval 337–414; it reads HLPPEQQRKR…VQKYEAWLAE (78 aa). The required for interaction with FASLG and localization to lysosomes stretch occupies residues 415–547; the sequence is AESRVLSNRG…PTSYLRVTLN (133 aa). The interval 420 to 485 is disordered; the sequence is LSNRGDSLSR…EFDEDFEEPA (66 aa). S426 carries the phosphoserine modification. The interval 431–487 is interaction with DNM2 and WASL; that stretch reads TRPPDPPTTAPPDSSSSSNNSGSQDNKESSEEPPSEEGQDTPIYTEFDEDFEEPASP. Positions 441–451 are enriched in low complexity; sequence PPDSSSSSNNS. Residues 476-547 are interaction with DNM1 and WASL; it reads EFDEDFEEPA…PTSYLRVTLN (72 aa). The interval 484–547 is required for podosome formation; it reads PASPIGQCVA…PTSYLRVTLN (64 aa). Positions 486 to 547 constitute an SH3 domain; that stretch reads SPIGQCVAIY…PTSYLRVTLN (62 aa). The tract at residues 490–547 is interaction with WAS; that stretch reads QCVAIYHFEGSSEGTVSMSEGEDLSLMEEDKGDGWTRVRRKQGGEGYVPTSYLRVTLN. Residues 492 to 547 form an interaction with ARHGAP17, DAAM1, DIAPH1 and DIAPH2 region; that stretch reads VAIYHFEGSSEGTVSMSEGEDLSLMEEDKGDGWTRVRRKQGGEGYVPTSYLRVTLN.

It belongs to the FNBP1 family. Homodimerizes, the dimers can polymerize end-to-end to form filamentous structures. Interacts specifically with GTP-bound CDC42 and RHOQ. Interacts with AKAP9, ARHGAP17, DAAM1, DIAPH1, DIAPH2, DNM1, DNM2, FASLG/FASL, GAPVD1, LYN, microtubules, SRC, WAS/WASP and WASL/N-WASP. Interacts with the ligand binding domain of the thyroid receptor (TR) in the presence of thyroid hormone. May interact with CTNNB1 and HD/HTT. Interacts with PDE6G. In terms of tissue distribution, expressed in adrenal gland, aorta, brain, heart, kidney, liver, skeletal muscle and spleen.

The protein localises to the cytoplasm. Its subcellular location is the cytoskeleton. It localises to the cell cortex. It is found in the lysosome. The protein resides in the golgi apparatus. The protein localises to the cell membrane. Its subcellular location is the cell projection. It localises to the phagocytic cup. Functionally, required to coordinate membrane tubulation with reorganization of the actin cytoskeleton during endocytosis. Also acts as a link between CDC42 signaling and regulation of the actin cytoskeleton. Binds to lipids such as phosphatidylinositol 4,5-bisphosphate and phosphatidylserine and promotes membrane invagination and the formation of tubules. Also enhances actin polymerization in the vicinity of membrane tubules by recruiting WASL/N-WASP which in turn activates the Arp2/3 complex. Actin polymerization and dynamin may promote the fission of membrane tubules to form endocytic vesicles. Required for the formation of podosomes, actin-rich adhesion structures specific to monocyte-derived cells. Required for translocation of GLUT4 to the plasma membrane in response to insulin signaling. May be required for the lysosomal retention of FASLG/FASL. The chain is Cdc42-interacting protein 4 (Trip10) from Rattus norvegicus (Rat).